The following is a 328-amino-acid chain: Flap endonuclease 1 (328 aa).

Residues 1-98 (MGVKFKDITN…ETQEERINIK (98 aa)) are N-domain. Residues aspartate 27, aspartate 80, glutamate 152, glutamate 154, aspartate 173, aspartate 175, and aspartate 227 each coordinate Mg(2+). The tract at residues 116–248 (AARKYAARTT…KGIKLIHKYG (133 aa)) is I-domain. Residues 320–328 (AQSSLEDWF) form an interaction with PCNA region.

Belongs to the XPG/RAD2 endonuclease family. FEN1 subfamily. In terms of assembly, interacts with PCNA. PCNA stimulates the nuclease activity without altering cleavage specificity. It depends on Mg(2+) as a cofactor.

Its function is as follows. Structure-specific nuclease with 5'-flap endonuclease and 5'-3' exonuclease activities involved in DNA replication and repair. During DNA replication, cleaves the 5'-overhanging flap structure that is generated by displacement synthesis when DNA polymerase encounters the 5'-end of a downstream Okazaki fragment. Binds the unpaired 3'-DNA end and kinks the DNA to facilitate 5' cleavage specificity. Cleaves one nucleotide into the double-stranded DNA from the junction in flap DNA, leaving a nick for ligation. Also involved in the base excision repair (BER) pathway. Acts as a genome stabilization factor that prevents flaps from equilibrating into structures that lead to duplications and deletions. Also possesses 5'-3' exonuclease activity on nicked or gapped double-stranded DNA. This chain is Flap endonuclease 1, found in Methanosphaera stadtmanae (strain ATCC 43021 / DSM 3091 / JCM 11832 / MCB-3).